The chain runs to 303 residues: Lipase chaperone (303 aa).

A helical membrane pass occupies residues 7-23 (TLAAACAAWLAWWAWPD).

This sequence belongs to the lipase chaperone family.

The protein resides in the cell inner membrane. Functionally, may be involved in the folding of the extracellular lipase during its passage through the periplasm. In Chromobacterium violaceum (strain ATCC 12472 / DSM 30191 / JCM 1249 / CCUG 213 / NBRC 12614 / NCIMB 9131 / NCTC 9757 / MK), this protein is Lipase chaperone (lifO).